The following is a 165-amino-acid chain: Destrin (165 aa).

Position 2 is an N-acetylalanine (Ala-2). Ser-3 bears the Phosphoserine mark. Residues 4–153 enclose the ADF-H domain; sequence GVQVADEVCR…NRACIAEKLG (150 aa). Position 19 is an N6-acetyllysine (Lys-19). A Nuclear localization signal motif is present at residues 30 to 34; the sequence is KKRKK.

This sequence belongs to the actin-binding proteins ADF family. ISGylated.

In terms of biological role, actin-depolymerizing protein. Severs actin filaments (F-actin) and binds to actin monomers (G-actin). Acts in a pH-independent manner. This Bos taurus (Bovine) protein is Destrin (DSTN).